A 478-amino-acid chain; its full sequence is Zinc metalloproteinase/disintegrin (478 aa).

An N-terminal signal peptide occupies residues 1-20 (MIQVLLVTICLAAFPYQGSS). Positions 21-187 (IILESGNVND…PIKKASDLNL (167 aa)) are excised as a propeptide. Residues 193 to 389 (RYVELFIVVD…QKPQCILKKP (197 aa)) form the Peptidase M12B domain. Intrachain disulfides connect Cys-304–Cys-384, Cys-344–Cys-368, and Cys-346–Cys-351. His-329 is a Zn(2+) binding site. The active site involves Glu-330. Residues His-333 and His-339 each coordinate Zn(2+). Positions 390–407 (LRTDTVSTPVSGNELLEA) are excised as a propeptide. A Disintegrin domain is found at 397–478 (TPVSGNELLE…ADCPRNGLYG (82 aa)). 6 cysteine pairs are disulfide-bonded: Cys-411/Cys-426, Cys-413/Cys-421, Cys-420/Cys-443, Cys-434/Cys-440, Cys-439/Cys-464, and Cys-452/Cys-471. Positions 456-458 (MVD) match the Cell attachment site; atypical (MVD) motif.

It belongs to the venom metalloproteinase (M12B) family. P-II subfamily. P-IIa sub-subfamily. As to quaternary structure, monomer (disintegrin). Zn(2+) is required as a cofactor. In terms of tissue distribution, expressed by the venom gland.

The protein localises to the secreted. The catalysed reaction is Cleavage of 3-Asn-|-Gln-4, 9-Ser-|-His-10 and 14-Ala-|-Leu-15 bonds in insulin B chain and 14-Tyr-|-Gln-15 and 8-Thr-|-Ser-9 in A chain. Cleaves type IV collagen at 73-Ala-|-Gln-74 in alpha1-(IV) and at 7-Gly-|-Leu-8 in alpha2-(IV).. Functionally, snake venom zinc metalloproteinase that causes hemorrhage by provoking the degradation of the sub-endothelial matrix proteins (fibronectin, laminin, type IV collagen, nidogen, and gelatins). Potent inhibitor of both collagen- (IC(50)=4 nM) and ADP-induced (IC(50)=8 nM) platelet aggregation. May act by binding to the platelet receptor GPIIb/GPIIIa (ITGA2B/ITGB3). This chain is Zinc metalloproteinase/disintegrin, found in Crotalus atrox (Western diamondback rattlesnake).